The sequence spans 166 residues: Regulatory protein RecX (166 aa).

This sequence belongs to the RecX family.

It is found in the cytoplasm. Modulates RecA activity. This chain is Regulatory protein RecX, found in Escherichia coli (strain SE11).